The following is a 706-amino-acid chain: Glutamine-dependent NAD(+) synthetase (706 aa).

One can recognise a CN hydrolase domain in the interval valine 5–leucine 275. Residue glutamate 45 is the Proton acceptor; for glutaminase activity of the active site. The active-site For glutaminase activity is lysine 114. The active-site Nucleophile; for glutaminase activity is the cysteine 175. A ligase region spans residues tyrosine 325–aspartate 706. Residue proline 355 to serine 362 participates in ATP binding. Residue serine 357 is part of the active site.

The protein in the C-terminal section; belongs to the NAD synthetase family. As to quaternary structure, homohexamer.

It catalyses the reaction deamido-NAD(+) + L-glutamine + ATP + H2O = L-glutamate + AMP + diphosphate + NAD(+) + H(+). It functions in the pathway cofactor biosynthesis; NAD(+) biosynthesis; NAD(+) from deamido-NAD(+) (L-Gln route): step 1/1. Its function is as follows. Catalyzes the final step of the nicotinamide adenine dinucleotide (NAD) de novo synthesis pathway, the ATP-dependent amidation of deamido-NAD using L-glutamine as a nitrogen source. The sequence is that of Glutamine-dependent NAD(+) synthetase (NADSYN1) from Homo sapiens (Human).